A 213-amino-acid chain; its full sequence is RNA pyrophosphohydrolase (213 aa).

One can recognise a Nudix hydrolase domain in the interval 6-149 (GFRPNVGIVL…KRGVYEIALT (144 aa)). The Nudix box motif lies at 38–59 (GGIDRGETPEQAMIRELHEEVG). The tract at residues 185–213 (NFELPPGGSFEPNPQTSYGLDASGKPHET) is disordered.

Belongs to the Nudix hydrolase family. RppH subfamily. It depends on a divalent metal cation as a cofactor.

Accelerates the degradation of transcripts by removing pyrophosphate from the 5'-end of triphosphorylated RNA, leading to a more labile monophosphorylated state that can stimulate subsequent ribonuclease cleavage. The chain is RNA pyrophosphohydrolase from Albidiferax ferrireducens (strain ATCC BAA-621 / DSM 15236 / T118) (Rhodoferax ferrireducens).